Here is an 83-residue protein sequence, read N- to C-terminus: MQDELFETEKAPPKNAKNAPKKSFEEHVHSLEQAIDRLNDPNLSLKDGMDLYKTAMQELFLAQKLLENAYLEYEKLQTTDKKA.

Residues 1-25 (MQDELFETEKAPPKNAKNAPKKSFE) form a disordered region.

This sequence belongs to the XseB family. As to quaternary structure, heterooligomer composed of large and small subunits.

The protein localises to the cytoplasm. The enzyme catalyses Exonucleolytic cleavage in either 5'- to 3'- or 3'- to 5'-direction to yield nucleoside 5'-phosphates.. In terms of biological role, bidirectionally degrades single-stranded DNA into large acid-insoluble oligonucleotides, which are then degraded further into small acid-soluble oligonucleotides. In Helicobacter pylori (strain P12), this protein is Exodeoxyribonuclease 7 small subunit.